The following is a 141-amino-acid chain: Putative antiporter subunit mnhB2 (141 aa).

The next 4 helical transmembrane spans lie at 10-30 (TVTK…FFAG), 35-55 (GGGF…FLAF), 70-90 (ILMI…MFFG), and 114-134 (ITLF…TVML).

The protein belongs to the CPA3 antiporters (TC 2.A.63) subunit B family. As to quaternary structure, may form a heterooligomeric complex that consists of seven subunits: mnhA2, mnhB2, mnhC2, mnhD2, mnhE2, mnhF2 and mnhG2.

The protein localises to the cell membrane. The polypeptide is Putative antiporter subunit mnhB2 (mnhB2) (Staphylococcus aureus (strain Mu3 / ATCC 700698)).